Reading from the N-terminus, the 1249-residue chain is Protein transport protein Sec31A (1249 aa).

7 WD repeats span residues 4–47 (KEID…EIFE), 64–111 (SSSH…AGDK), 120–160 (KHTG…TPMT), 166–206 (QPPE…PIIK), 209–254 (DHSN…SPLR), 258–298 (NHAR…VLYE), and 301–342 (TNTQ…DGLR). An interaction with SEC13 region spans residues 161-470 (PGAKTQPPED…IDASQTDFEK (310 aa)). A WD 8; interaction with SEC13 repeat occupies 397–429 (SFSFGGKLVTFENVTGQPQQGAEQPRRQPVFIS). Residue Arg423 is modified to Asymmetric dimethylarginine. Residues Ser526 and Ser531 each carry the phosphoserine modification. Residue Lys647 forms a Glycyl lysine isopeptide (Lys-Gly) (interchain with G-Cter in ubiquitin) linkage. Disordered regions lie at residues 790 to 829 (QGRSVPGQESSRSSYEGQPLPKGGPGPLAGHPQVSRVQSQ), 842 to 940 (TTWS…RYPN), and 954 to 1123 (PHMY…PIGN). Over residues 796 to 805 (GQESSRSSYE) the composition is skewed to polar residues. A Phosphoserine modification is found at Ser799. The segment at 800–1142 (SRSSYEGQPL…TEKITKKPIP (343 aa)) is interaction with PDCD6. The short motif at 873-879 (GFIMHGN) is the ALG-2-binding site motif-2 (ABS-2) element. Over residues 898–908 (QPPPYPQPQPY) the composition is skewed to pro residues. Low complexity-rich tracts occupy residues 961 to 970 (PASSPTSSSA) and 991 to 1007 (PSSSAYALPPGTTGTPP). Residues 1013-1024 (PASQRTGPQNGW) are compositionally biased toward polar residues. A compositionally biased stretch (low complexity) spans 1056–1074 (PGGDPQPQGLQQQPSASGP). A Phosphothreonine modification is found at Thr1190. Ser1192 is modified (phosphoserine). A Glycyl lysine isopeptide (Lys-Gly) (interchain with G-Cter in ubiquitin) cross-link involves residue Lys1246.

Belongs to the WD repeat SEC31 family. As to quaternary structure, COPII is composed of at least 5 proteins: the SEC23/24 complex, the SEC13/31 complex and SAR1. SEC13 and SEC31 make a 2:2 tetramer that forms the edge element of the COPII outer coat. The tetramer self-assembles in multiple copies to form the complete polyhedral cage. Interacts (via WD 8) with SEC13. Interacts with PDCD6; interaction takes place in response to cytosolic calcium increase and leads to bridge together the BCR(KLHL12) complex and SEC31A, leading to monoubiquitination. Interacts with KLHL12. In terms of processing, monoubiquitinated by the BCR(KLHL12) E3 ubiquitin ligase complex, leading to regulate the size of COPII coats. As to expression, ubiquitously expressed.

It localises to the cytoplasm. The protein resides in the cytoplasmic vesicle. The protein localises to the COPII-coated vesicle membrane. It is found in the endoplasmic reticulum membrane. Its function is as follows. Component of the coat protein complex II (COPII) which promotes the formation of transport vesicles from the endoplasmic reticulum (ER). The coat has two main functions, the physical deformation of the endoplasmic reticulum membrane into vesicles and the selection of cargo molecules. This is Protein transport protein Sec31A (Sec31a) from Rattus norvegicus (Rat).